A 273-amino-acid polypeptide reads, in one-letter code: Shikimate dehydrogenase (NADP(+)) (273 aa).

Residues 19-21 (SQS) and Thr-66 contribute to the shikimate site. Residue Lys-70 is the Proton acceptor of the active site. Glu-82 contributes to the NADP(+) binding site. Positions 91 and 107 each coordinate shikimate. Residues 131 to 135 (GAGGA) and Met-217 contribute to the NADP(+) site. Tyr-219 serves as a coordination point for shikimate. Residue Gly-241 participates in NADP(+) binding.

This sequence belongs to the shikimate dehydrogenase family. As to quaternary structure, homodimer.

It catalyses the reaction shikimate + NADP(+) = 3-dehydroshikimate + NADPH + H(+). It functions in the pathway metabolic intermediate biosynthesis; chorismate biosynthesis; chorismate from D-erythrose 4-phosphate and phosphoenolpyruvate: step 4/7. Involved in the biosynthesis of the chorismate, which leads to the biosynthesis of aromatic amino acids. Catalyzes the reversible NADPH linked reduction of 3-dehydroshikimate (DHSA) to yield shikimate (SA). The chain is Shikimate dehydrogenase (NADP(+)) from Buchnera aphidicola subsp. Schizaphis graminum (strain Sg).